The sequence spans 453 residues: Protein LOW PSII ACCUMULATION 1, chloroplastic (453 aa).

The transit peptide at 1–92 (MAVATAPSLN…LDLFKRGRVK (92 aa)) directs the protein to the chloroplast. 2 TPR repeats span residues 75-108 (AELC…APNP) and 112-145 (QAAY…YNLK). The next 2 helical transmembrane spans lie at 202–222 (FFYF…VPRL) and 238–258 (TTGN…LFLW).

As to quaternary structure, interacts with psbA, but not with psbD, petB, ALB3, LPA2 or LPA3. Is not a component of the PSII complex.

The protein localises to the plastid. It localises to the chloroplast thylakoid membrane. Chaperone required for efficient photosystem II (PSII) assembly. Binds to psbA during de novo biogenesis of PSII. This Arabidopsis thaliana (Mouse-ear cress) protein is Protein LOW PSII ACCUMULATION 1, chloroplastic (LPA1).